We begin with the raw amino-acid sequence, 106 residues long: ATP-dependent Clp protease adapter protein ClpS (106 aa).

The protein belongs to the ClpS family. Binds to the N-terminal domain of the chaperone ClpA.

Its function is as follows. Involved in the modulation of the specificity of the ClpAP-mediated ATP-dependent protein degradation. This chain is ATP-dependent Clp protease adapter protein ClpS, found in Vibrio vulnificus (strain CMCP6).